Reading from the N-terminus, the 96-residue chain is Small ribosomal subunit protein bS18 (96 aa).

The span at 1–22 (MYKDIDSHQRDSRTDGHQDGFK) shows a compositional bias: basic and acidic residues. Residues 1 to 25 (MYKDIDSHQRDSRTDGHQDGFKKNP) form a disordered region.

Belongs to the bacterial ribosomal protein bS18 family. In terms of assembly, part of the 30S ribosomal subunit. Forms a tight heterodimer with protein bS6.

In terms of biological role, binds as a heterodimer with protein bS6 to the central domain of the 16S rRNA, where it helps stabilize the platform of the 30S subunit. In Borrelia duttonii (strain Ly), this protein is Small ribosomal subunit protein bS18.